We begin with the raw amino-acid sequence, 816 residues long: Sucrose synthase 2 (816 aa).

Position 15 is a phosphoserine (Ser15). Positions 280 to 757 are GT-B glycosyltransferase; the sequence is MVFNVVILSP…GLQRIEEKYT (478 aa).

The protein belongs to the glycosyltransferase 1 family. Plant sucrose synthase subfamily.

It catalyses the reaction an NDP-alpha-D-glucose + D-fructose = a ribonucleoside 5'-diphosphate + sucrose + H(+). Sucrose-cleaving enzyme that provides UDP-glucose and fructose for various metabolic pathways. The polypeptide is Sucrose synthase 2 (SUS1) (Zea mays (Maize)).